The following is a 490-amino-acid chain: MTSKSSPLIFERSREGRYAYSLPKSDIKTNSVESLLDDKFIRKNKAEFPEVAELDLVRHYTELSNKNFGVDNGFYPLGSCTMKYNPKINEKVARIPGFSESHPLQDEDQVQGSLEIIYSLQEELKEITGMDEVTLQPAAGAHGEWTALMIFKAYHENNGEGHRDEVIVPDSAHGTNPASASFAGFKSVTVKSNERGEVNIDDLKRVVNENTAAIMLTNPNTLGIFEKNIMEIREIVHNAGGLLYYDGANLNAIMDKVRPGDMGFDAVHLNLHKTFTGPHGGGGPGSGPVGVVKELASYLPKPMVIKDGDKFKYDNDIKNSIGRVKPFYGNFGIYLRAYTYIRTMGATGLKEVSEAAVLNANYIKARLSKHFEIPYKQYCKHEFVLSGVRQKEFGVRTLDMAKRLLDFGVHPPTIYFPLNVEEGMMIEPTETESKETLDYFIDTLISIAEEAKNDPDKVLEAPHTTVIDRLDEATAARKPILKFENLKQEK.

K273 carries the N6-(pyridoxal phosphate)lysine modification.

The protein belongs to the GcvP family. C-terminal subunit subfamily. In terms of assembly, the glycine cleavage system is composed of four proteins: P, T, L and H. In this organism, the P 'protein' is a heterodimer of two subunits. Pyridoxal 5'-phosphate serves as cofactor.

It carries out the reaction N(6)-[(R)-lipoyl]-L-lysyl-[glycine-cleavage complex H protein] + glycine + H(+) = N(6)-[(R)-S(8)-aminomethyldihydrolipoyl]-L-lysyl-[glycine-cleavage complex H protein] + CO2. The glycine cleavage system catalyzes the degradation of glycine. The P protein binds the alpha-amino group of glycine through its pyridoxal phosphate cofactor; CO(2) is released and the remaining methylamine moiety is then transferred to the lipoamide cofactor of the H protein. This chain is Probable glycine dehydrogenase (decarboxylating) subunit 2, found in Staphylococcus aureus (strain Newman).